A 189-amino-acid polypeptide reads, in one-letter code: Large ribosomal subunit protein bL9 (189 aa).

It belongs to the bacterial ribosomal protein bL9 family.

In terms of biological role, binds to the 23S rRNA. The chain is Large ribosomal subunit protein bL9 from Brucella melitensis biotype 2 (strain ATCC 23457).